The chain runs to 255 residues: UPF0246 protein BVU_0413 (255 aa).

It belongs to the UPF0246 family.

This Phocaeicola vulgatus (strain ATCC 8482 / DSM 1447 / JCM 5826 / CCUG 4940 / NBRC 14291 / NCTC 11154) (Bacteroides vulgatus) protein is UPF0246 protein BVU_0413.